Here is a 1344-residue protein sequence, read N- to C-terminus: Regulatory-associated protein of TOR 1 (1344 aa).

A compositionally biased stretch (basic and acidic residues) spans 28 to 44 (CVSSHDDGDSRRKDSEA). 2 disordered regions span residues 28 to 56 (CVSSHDDGDSRRKDSEAKSSSSYGNGTTE) and 771 to 818 (ASTD…DSVS). Low complexity predominate over residues 785-816 (SSSPLGSSGLMQGSPLSDDSSLHSDSGMMHDS). 7 WD repeats span residues 1025-1064 (RFETGTKTALLHPFSPIVVAADENERIRVWNYEEATLLNG), 1070-1111 (FPDK…GKQK), 1125-1164 (GARDLNAVVDWQQQSGYLYASGETSTVTLWDLEKEQLVRS), 1168-1208 (ESEC…PLVC), 1214-1255 (QKVE…DTYL), 1259-1298 (AHRGSLTALAVHRHAPIIASGSAKQLIKVFSLQGEQLGII), and 1307-1344 (QKIGSVSCLTFHPYQVLLAAGAADSFVSIYTHDNSQAR).

This sequence belongs to the WD repeat RAPTOR family. Interacts with TOR, ATPK1 and ML1. Interacts with KIN10. In terms of processing, phosphorylated by KIN10. As to expression, expressed in roots, leaves, flowers and seeds.

Its subcellular location is the cytoplasm. Probable component of the plant TOR kinase pathway that recruits substrates for TOR. Modulates plant cell growth and regulates the activity of ATPK1 kinase in response to osmotic stress. The polypeptide is Regulatory-associated protein of TOR 1 (RAPTOR1) (Arabidopsis thaliana (Mouse-ear cress)).